Consider the following 258-residue polypeptide: Type III pantothenate kinase (258 aa).

An ATP-binding site is contributed by 6 to 13 (DIGNTNTV). Residues Tyr-100 and 107–110 (GADR) contribute to the substrate site. Asp-109 acts as the Proton acceptor in catalysis. A K(+)-binding site is contributed by Asp-129. Thr-132 lines the ATP pocket. Thr-185 lines the substrate pocket.

It belongs to the type III pantothenate kinase family. In terms of assembly, homodimer. It depends on NH4(+) as a cofactor. The cofactor is K(+).

Its subcellular location is the cytoplasm. The catalysed reaction is (R)-pantothenate + ATP = (R)-4'-phosphopantothenate + ADP + H(+). It functions in the pathway cofactor biosynthesis; coenzyme A biosynthesis; CoA from (R)-pantothenate: step 1/5. In terms of biological role, catalyzes the phosphorylation of pantothenate (Pan), the first step in CoA biosynthesis. The sequence is that of Type III pantothenate kinase from Syntrophobacter fumaroxidans (strain DSM 10017 / MPOB).